The sequence spans 359 residues: WAT1-related protein At4g28040 (359 aa).

Helical transmembrane passes span 10–30, 37–57, 66–86, 103–123, 133–153, 170–190, 204–224, 240–260, 266–286, and 292–312; these read LALVMLQFTSAGVALFTKAAF, TVFVVYRQAIATLFICPISFI, PSLGVRGFWWVALTAVIGVTV, ACAMTNLIPAVTFIISIIVGF, SVAKVIGTGVCVGGAMAMTFL, WLLGCFFLLISTFAWSLWLIL, TSACTCFIATIASFLVALALG, SCCIYSGFQLAISFFLQAWIV, VFSALFNPLSAVIVTFFGALY, and YLGSLLGALAIILGLYIVLWG. The EamA 1 domain maps to 18–131; the sequence is TSAGVALFTK…GFESIKRRSM (114 aa). The EamA 2 domain maps to 199–310; it reads PDHLYTSACT…AIILGLYIVL (112 aa).

The protein belongs to the drug/metabolite transporter (DMT) superfamily. Plant drug/metabolite exporter (P-DME) (TC 2.A.7.4) family.

It is found in the membrane. The polypeptide is WAT1-related protein At4g28040 (Arabidopsis thaliana (Mouse-ear cress)).